The primary structure comprises 113 residues: N(2)-fixation sustaining protein CowN (113 aa).

This sequence belongs to the CowN family.

Is required to sustain N(2)-dependent growth in the presence of low levels of carbon monoxide (CO). Probably acts by protecting the N(2) fixation ability of the nitrogenase complex, which is inactivated in the presence of CO. The polypeptide is N(2)-fixation sustaining protein CowN (Azoarcus sp. (strain BH72)).